The chain runs to 506 residues: 2,3-bisphosphoglycerate-independent phosphoglycerate mutase (506 aa).

Residues Asp13 and Ser63 each contribute to the Mn(2+) site. The active-site Phosphoserine intermediate is Ser63. Residues His124, 153–154, Arg183, Arg189, 254–257, and Lys330 each bind substrate; these read RD and RADR. 5 residues coordinate Mn(2+): Asp396, His400, Asp437, His438, and His456.

The protein belongs to the BPG-independent phosphoglycerate mutase family. In terms of assembly, monomer. The cofactor is Mn(2+).

The enzyme catalyses (2R)-2-phosphoglycerate = (2R)-3-phosphoglycerate. It functions in the pathway carbohydrate degradation; glycolysis; pyruvate from D-glyceraldehyde 3-phosphate: step 3/5. Functionally, catalyzes the interconversion of 2-phosphoglycerate and 3-phosphoglycerate. This chain is 2,3-bisphosphoglycerate-independent phosphoglycerate mutase, found in Cereibacter sphaeroides (strain ATCC 17023 / DSM 158 / JCM 6121 / CCUG 31486 / LMG 2827 / NBRC 12203 / NCIMB 8253 / ATH 2.4.1.) (Rhodobacter sphaeroides).